The chain runs to 432 residues: Chaperone SurA (432 aa).

Positions 1–26 (MKKIASFCSAAVLIASSFLLNNTVQA) are cleaved as a signal peptide. PpiC domains follow at residues 176–277 (QTEY…KVQD) and 286–386 (VQEV…EVTG).

The protein localises to the periplasm. It catalyses the reaction [protein]-peptidylproline (omega=180) = [protein]-peptidylproline (omega=0). In terms of biological role, chaperone involved in the correct folding and assembly of outer membrane proteins. Recognizes specific patterns of aromatic residues and the orientation of their side chains, which are found more frequently in integral outer membrane proteins. May act in both early periplasmic and late outer membrane-associated steps of protein maturation. The sequence is that of Chaperone SurA from Idiomarina loihiensis (strain ATCC BAA-735 / DSM 15497 / L2-TR).